A 185-amino-acid chain; its full sequence is Signal peptidase I P (185 aa).

Topologically, residues 1 to 14 (MFDKEKRKKSNIID) are cytoplasmic. Residues 15 to 34 (WIKAILIALILVFLVRTFLF) traverse the membrane as a helical segment. Topologically, residues 35–185 (EPYIVQGESM…FPLDRIRHAK (151 aa)) are extracellular. Catalysis depends on residues Ser43 and Lys85.

This sequence belongs to the peptidase S26 family.

The protein localises to the cell membrane. The catalysed reaction is Cleavage of hydrophobic, N-terminal signal or leader sequences from secreted and periplasmic proteins.. The sequence is that of Signal peptidase I P (sipP) from Bacillus subtilis subsp. natto.